Reading from the N-terminus, the 540-residue chain is SNW/SKI-interacting protein B (540 aa).

4 disordered regions span residues 1–106, 215–273, 351–402, and 502–526; these read MVLR…SLTV, GETQ…NPKG, GAAP…RDRD, and ASVA…DPFH. 2 stretches are compositionally biased toward basic and acidic residues: residues 16–29 and 83–94; these read PHDH…KERY and MGRRGGDGDGEQ. Positions 189 to 353 are SNW; that stretch reads PEFIKYTPAR…KARAEMLGAA (165 aa). A compositionally biased stretch (pro residues) spans 236 to 251; the sequence is AGSPPVPVLRSPPRPP. The span at 359–382 shows a compositional bias: basic and acidic residues; that stretch reads ERSKAAAERDAIREERRRERRLEA. Residues 383 to 393 are compositionally biased toward low complexity; that stretch reads RAAAAAASKKS.

The protein belongs to the SNW family.

The protein resides in the nucleus. This chain is SNW/SKI-interacting protein B, found in Oryza sativa subsp. japonica (Rice).